The following is a 787-amino-acid chain: Protocadherin beta-15 (787 aa).

The signal sequence occupies residues 1–26; that stretch reads MEPAGERFPEQRQVLILLLLLEVTLA. The Extracellular portion of the chain corresponds to 27–690; sequence GWEPRRYSVM…AQADSLTVYL (664 aa). Cadherin domains lie at 35–133, 138–242, 247–347, 352–451, and 456–561; these read VMEE…SPEF, ITLK…APEF, YEVQ…FPEL, LTSP…APAF, and YTLF…SPFV. Asparagine 418 and asparagine 436 each carry an N-linked (GlcNAc...) asparagine glycan. Residue asparagine 567 is glycosylated (N-linked (GlcNAc...) asparagine). Positions 568 to 671 constitute a Cadherin 6 domain; the sequence is GSAPCTELVP…LVDGFSQPYL (104 aa). A helical membrane pass occupies residues 691–711; it reads VVALASVSSLFLFSVLLFVAV. The Cytoplasmic portion of the chain corresponds to 712 to 787; sequence RLCRRSRAAS…DSRRKSEFLE (76 aa).

The protein localises to the cell membrane. In terms of biological role, potential calcium-dependent cell-adhesion protein. May be involved in the establishment and maintenance of specific neuronal connections in the brain. The chain is Protocadherin beta-15 (PCDHB15) from Pan troglodytes (Chimpanzee).